Consider the following 94-residue polypeptide: MLKPLGDRVIISFVETEEKSVGGFVLAGASHDATKTAKVLAVGDGIRTLTGELVAPSVAEGDTVLVENDAGLEVKDGNEKVTVVRESDIVAVVK.

The protein belongs to the GroES chaperonin family. In terms of assembly, heptamer of 7 subunits arranged in a ring. Interacts with the chaperonin GroEL.

It localises to the cytoplasm. Its function is as follows. Together with the chaperonin GroEL, plays an essential role in assisting protein folding. The GroEL-GroES system forms a nano-cage that allows encapsulation of the non-native substrate proteins and provides a physical environment optimized to promote and accelerate protein folding. GroES binds to the apical surface of the GroEL ring, thereby capping the opening of the GroEL channel. The protein is Co-chaperonin GroES of Streptococcus agalactiae.